A 464-amino-acid chain; its full sequence is Argininosuccinate lyase (464 aa).

This sequence belongs to the lyase 1 family. Argininosuccinate lyase subfamily.

It localises to the cytoplasm. It carries out the reaction 2-(N(omega)-L-arginino)succinate = fumarate + L-arginine. It functions in the pathway amino-acid biosynthesis; L-arginine biosynthesis; L-arginine from L-ornithine and carbamoyl phosphate: step 3/3. In Pseudomonas entomophila (strain L48), this protein is Argininosuccinate lyase.